The sequence spans 47 residues: Small ribosomal subunit protein uS14 (47 aa).

The Zn(2+) site is built by cysteine 12, cysteine 15, cysteine 30, and cysteine 33.

Belongs to the universal ribosomal protein uS14 family. Zinc-binding uS14 subfamily. Part of the 30S ribosomal subunit. It depends on Zn(2+) as a cofactor.

Binds 16S rRNA, required for the assembly of 30S particles. In Methanosphaera stadtmanae (strain ATCC 43021 / DSM 3091 / JCM 11832 / MCB-3), this protein is Small ribosomal subunit protein uS14.